The chain runs to 690 residues: Protein arginine N-methyltransferase 7 (690 aa).

SAM-dependent MTase PRMT-type domains are found at residues 5-355 (FQDS…FSLW) and 364-690 (KEPL…EEEQ).

It belongs to the class I-like SAM-binding methyltransferase superfamily. Protein arginine N-methyltransferase family. PRMT7 subfamily.

Functionally, essential arginine methyltransferase that can both catalyze the formation of omega-N monomethylarginine (MMA) and symmetrical dimethylarginine (sDMA). Specifically mediates the symmetrical dimethylation of arginine residues in the small nuclear ribonucleoproteins SmD1 and SmD3. In Anopheles gambiae (African malaria mosquito), this protein is Protein arginine N-methyltransferase 7 (Art7).